Reading from the N-terminus, the 816-residue chain is MDIGCKVLVFFTCFLTVTAEIYIVTMEGEPIISYKGGDNGFEATAVESDEKIDTTSELVTSYARHLERKHDMLLGMLFVEGSYKKLYSYKHLINGFAAHVSPDQAEMLRRAPGVKSVDRDWKVRKLTTHTPQFLGLPTDVWPTGGGYDRAGEDIVIGFIDSGIFPHHPSFASHHTTVPYGPHPSYKGKCEEDPHTKISFCNGKIIGAQHFAEAAKAAGAFNPDIDFASPMDGDGHGSHTAAIAAGNNGIPVRMHGYEFGKASGMAPRARIAVYKALYRLFGGFVADVVAAIDQAVHDGVDILSLSVGPNSPPATTKTTFLNPFDATLLGAVKAGVFVAQAAGNGGPFPKTLVSYSPWITTVAAAIDDRRYKNHLTLGNGKMLAGIGLSPSTRPHRSYKMVSANDVLLGSSGMKYNPSDCQKPEVLNKKLVEGNILLCGYSFNFVAGSASIKKVAETAKHLGAAGFVLVVENVSPGTKFDPVPSCIPGILITDVSKSMDLIDYYNVTTSRDWMGRVKDFKAEGSIGDGLEPILHKSAPEVALFSARGPNTKDFSFQDADLLKPDILAPGSLIWSAWSANGTDEANYIGEGFALISGTSMAAPHIAGIAALVKQKHPQWSPAAIKSALMTTSTVIDRAGRPLQAQQYSETETVTLVKATPFDYGSGHVNPSAALDPGLIFDAGYEDYIGFLCTTPGIDAHEIKNFTNTPCNFKMVHPSNFNTPSIAISHLVRTQTVTRRVTNVAEEEETYTITSRMEPAIAIEVSPPAMTVRAGASRTFSVTLTVRSVTGAYSFGQVTLKGSRGHKVTLPVVAMGQRR.

Positions 1–19 (MDIGCKVLVFFTCFLTVTA) are cleaved as a signal peptide. Residues 20–126 (EIYIVTMEGE…VDRDWKVRKL (107 aa)) constitute a propeptide, activation peptide. In terms of domain architecture, Inhibitor I9 spans 22–124 (YIVTMEGEPI…KSVDRDWKVR (103 aa)). Positions 120 to 672 (DWKVRKLTTH…SGHVNPSAAL (553 aa)) constitute a Peptidase S8 domain. Catalysis depends on charge relay system residues Asp160 and His235. The 75-residue stretch at 418-492 (DCQKPEVLNK…SCIPGILITD (75 aa)) folds into the PA domain. 2 N-linked (GlcNAc...) asparagine glycosylation sites follow: Asn504 and Asn578. Ser597 (charge relay system) is an active-site residue. Asn702 carries N-linked (GlcNAc...) asparagine glycosylation.

This sequence belongs to the peptidase S8 family.

The protein resides in the secreted. This is Subtilisin-like protease SBT2.6 from Arabidopsis thaliana (Mouse-ear cress).